Here is a 1914-residue protein sequence, read N- to C-terminus: Zinc finger protein Rlf (1914 aa).

Position 41 is a phosphoserine (serine 41). Positions 521–540 are enriched in basic and acidic residues; sequence KQYRRRDLTDQHKEKRDKKP. Residues 521 to 541 form a disordered region; that stretch reads KQYRRRDLTDQHKEKRDKKPI. The C2H2-type 1 zinc finger occupies 582-604; that stretch reads YTCPVCIKKFKRKEMFVPHVMEH. Lysine 622 is covalently cross-linked (Glycyl lysine isopeptide (Lys-Gly) (interchain with G-Cter in SUMO2)). Phosphoserine occurs at positions 632 and 634. C2H2-type zinc fingers lie at residues 671-696, 714-736, 742-766, 771-795, and 801-825; these read YPCPGTDCSRVFKQFKYLSVHLKAEH, EKCTYCRRHFMSAFHLREHEQVH, YMCVSIDCYARFGSVNELLNHKQKH, YKCELNGCNIVFSDLGQLYHHEAQH, and YTCNFLGCKKFYYSKIEYQNHLSMH. Lysine 839 is covalently cross-linked (Glycyl lysine isopeptide (Lys-Gly) (interchain with G-Cter in SUMO2)). The disordered stretch occupies residues 882-907; it reads TETAENLKENSDSNSSDQLSHSSSAS. Residues 893 to 907 are compositionally biased toward low complexity; that stretch reads DSNSSDQLSHSSSAS. Residues 954–979 form a C2H2-type 7 zinc finger; the sequence is FTCGFDGCGSTYKNARGMQKHLRKVH. The tract at residues 993-1028 is disordered; that stretch reads LFPSLGNEHNQTTEKLDAEPKPCSDTNSDSPDEGLD. Basic and acidic residues predominate over residues 1003-1014; that stretch reads QTTEKLDAEPKP. 2 consecutive C2H2-type zinc fingers follow at residues 1127–1152 and 1172–1195; these read FFCELQGCKYEFVTREALLMHYLKKH and FQCHICQRSFTRKTHLRIHYKNKH. The disordered stretch occupies residues 1231–1290; that stretch reads LGGDPSSNSEKPHCHPKKDECSSETDLESSCEETESKTSDISSPIGSHREEQEGREGRGS. A compositionally biased stretch (basic and acidic residues) spans 1240-1251; it reads EKPHCHPKKDEC. Positions 1252–1263 are enriched in acidic residues; that stretch reads SSETDLESSCEE. The span at 1277-1289 shows a compositional bias: basic and acidic residues; the sequence is SHREEQEGREGRG. 5 consecutive C2H2-type zinc fingers follow at residues 1310–1335, 1362–1387, 1407–1432, 1444–1469, and 1549–1574; these read FHCIHKTCNSSFTNLKGLIRHYRTVH, FACKYKECNKRFLCSKALAKHCSDSH, FSCNQPQCPAVFYTFNKLKHHLMEQH, IHCDLNGCGQIFTHRSNYSQHVYYRH, and YPCMVQGCLSVVKLESSIVRHYKRTH. Lysine 1423 is covalently cross-linked (Glycyl lysine isopeptide (Lys-Gly) (interchain with G-Cter in SUMO2)). Glycyl lysine isopeptide (Lys-Gly) (interchain with G-Cter in SUMO2) cross-links involve residues lysine 1599 and lysine 1611. The disordered stretch occupies residues 1620–1654; the sequence is SERTEHSHSPGDSSAPIQNTDCCHSSERDGGQKGC. Residues 1629–1642 show a composition bias toward polar residues; that stretch reads PGDSSAPIQNTDCC. Lysine 1696 participates in a covalent cross-link: Glycyl lysine isopeptide (Lys-Gly) (interchain with G-Cter in SUMO2). The disordered stretch occupies residues 1725–1757; the sequence is ESETRQHSSGQENTVKNPTHVPKENFRKHSQPR. The segment covering 1731–1741 has biased composition (polar residues); it reads HSSGQENTVKN. A Glycyl lysine isopeptide (Lys-Gly) (interchain with G-Cter in SUMO2) cross-link involves residue lysine 1762. Residues 1783 to 1807 form a disordered region; the sequence is KEDDFDDWEPSEHLTLSNSSQSSND. Polar residues predominate over residues 1796-1807; it reads LTLSNSSQSSND.

This sequence belongs to the krueppel C2H2-type zinc-finger protein family. As to quaternary structure, interacts with RIT1 and RIT2. As to expression, widely expressed in fetal and adult tissues.

The protein localises to the nucleus. Functionally, may be involved in transcriptional regulation. The sequence is that of Zinc finger protein Rlf (RLF) from Homo sapiens (Human).